Consider the following 120-residue polypeptide: U13-lycotoxin-Ls1a (120 aa).

A signal peptide spans 1–16 (MKILFVLISILYAVYC). A propeptide spanning residues 17–54 (FSSEEDVDSAYLANELEPVEDINSEQYAALEPKEEQGR) is cleaved from the precursor. 4 disulfides stabilise this stretch: Cys-56–Cys-70, Cys-63–Cys-76, Cys-69–Cys-87, and Cys-78–Cys-85. Residues 56-95 (CADMGQDCKDDCDCCLNIATCNCWFGRYFCSCTFGDYQTC) enclose the Agouti domain.

Belongs to the neurotoxin 05 (agouti) family. Post-translationally, contains 6 disulfide bonds. In terms of tissue distribution, expressed by the venom gland.

Its subcellular location is the secreted. This chain is U13-lycotoxin-Ls1a, found in Lycosa singoriensis (Wolf spider).